The following is a 132-amino-acid chain: D-ribose pyranase (132 aa).

His20 functions as the Proton donor in the catalytic mechanism. Substrate-binding positions include Asp28, His99, and 121 to 123 (YSN).

It belongs to the RbsD / FucU family. RbsD subfamily. As to quaternary structure, homodecamer.

Its subcellular location is the cytoplasm. It carries out the reaction beta-D-ribopyranose = beta-D-ribofuranose. It functions in the pathway carbohydrate metabolism; D-ribose degradation; D-ribose 5-phosphate from beta-D-ribopyranose: step 1/2. Its function is as follows. Catalyzes the interconversion of beta-pyran and beta-furan forms of D-ribose. In Lactococcus lactis subsp. cremoris (strain SK11), this protein is D-ribose pyranase.